A 298-amino-acid chain; its full sequence is MQQQLDAYCAHLRSERQVSPHTLQAYRRDLEKVLGFCEKMQVRSWTDLDIQGLRSLIARLHQQGQSSRSLARLLSAVRGLYHYLNREGLCTHDPANGLAPPKGERRLPKTLDTDRTLQLLDGAVEDDFLAHRDQAILELFYSCGLRLSELTSLNLDQLDLADGLVQVHGKGSKTRVLPVGKKARSALEQWLPLRALSNPPDGALFVSQKGRRLGPRAIQLRVKAAGERELGQNLHPHMLRHSFASHLLESSQDLRAVQELLGHSDIKTTQIYTHLDFQHLAAVYDSAHPRAKRNKGGE.

In terms of domain architecture, Core-binding (CB) spans 1–85 (MQQQLDAYCA…AVRGLYHYLN (85 aa)). Residues 106–285 (RLPKTLDTDR…DFQHLAAVYD (180 aa)) enclose the Tyr recombinase domain. Catalysis depends on residues R146, K170, H237, R240, and H263. The active-site O-(3'-phospho-DNA)-tyrosine intermediate is the Y272.

The protein belongs to the 'phage' integrase family. XerC subfamily. Forms a cyclic heterotetrameric complex composed of two molecules of XerC and two molecules of XerD.

It is found in the cytoplasm. In terms of biological role, site-specific tyrosine recombinase, which acts by catalyzing the cutting and rejoining of the recombining DNA molecules. The XerC-XerD complex is essential to convert dimers of the bacterial chromosome into monomers to permit their segregation at cell division. It also contributes to the segregational stability of plasmids. The protein is Tyrosine recombinase XerC of Pseudomonas fluorescens (strain ATCC BAA-477 / NRRL B-23932 / Pf-5).